The following is a 154-amino-acid chain: Transcriptional repressor NrdR (154 aa).

A zinc finger spans residues 3–34; the sequence is CPFCGANDTKVIDSRLVAEGEQVRRRRECLAC. One can recognise an ATP-cone domain in the interval 49–139; the sequence is PRLIKQDGSR…VYRRFQDLNE (91 aa).

The protein belongs to the NrdR family. Zn(2+) is required as a cofactor.

In terms of biological role, negatively regulates transcription of bacterial ribonucleotide reductase nrd genes and operons by binding to NrdR-boxes. This is Transcriptional repressor NrdR from Pseudomonas syringae pv. syringae (strain B728a).